Consider the following 352-residue polypeptide: NAD(P)H pyrophosphatase NUDT13, mitochondrial (352 aa).

Residues 1-20 constitute a mitochondrion transit peptide; sequence MSLYCRTFFRRKSFGCYRLL. One can recognise a Nudix hydrolase domain in the interval 196–323; that stretch reads PQMAPVVITL…SLALQPSEAS (128 aa). The Nudix box signature appears at 216-240; sequence RQSSFPKGLYSALAGFCDIGESVEE.

Belongs to the Nudix hydrolase family. Mg(2+) is required as a cofactor. It depends on Mn(2+) as a cofactor.

The protein localises to the mitochondrion. It carries out the reaction NADH + H2O = reduced beta-nicotinamide D-ribonucleotide + AMP + 2 H(+). The catalysed reaction is NAD(+) + H2O = beta-nicotinamide D-ribonucleotide + AMP + 2 H(+). It catalyses the reaction NADPH + H2O = reduced beta-nicotinamide D-ribonucleotide + adenosine 2',5'-bisphosphate + 2 H(+). Its function is as follows. NAD(P)H pyrophosphatase that hydrolyzes NADH into NMNH and AMP, and NADPH into NMNH and 2',5'-ADP. Has a marked preference for the reduced pyridine nucleotides. Does not show activity toward NAD-capped RNAs; the NAD-cap is an atypical cap present at the 5'-end of some RNAs. The protein is NAD(P)H pyrophosphatase NUDT13, mitochondrial of Mus musculus (Mouse).